The sequence spans 320 residues: o-succinylbenzoate synthase (320 aa).

Lysine 133 (proton donor) is an active-site residue. Residues aspartate 161, glutamate 190, and aspartate 213 each coordinate Mg(2+). The active-site Proton acceptor is lysine 235.

It belongs to the mandelate racemase/muconate lactonizing enzyme family. MenC type 1 subfamily. A divalent metal cation is required as a cofactor.

The enzyme catalyses (1R,6R)-6-hydroxy-2-succinyl-cyclohexa-2,4-diene-1-carboxylate = 2-succinylbenzoate + H2O. It participates in quinol/quinone metabolism; 1,4-dihydroxy-2-naphthoate biosynthesis; 1,4-dihydroxy-2-naphthoate from chorismate: step 4/7. The protein operates within quinol/quinone metabolism; menaquinone biosynthesis. Its function is as follows. Converts 2-succinyl-6-hydroxy-2,4-cyclohexadiene-1-carboxylate (SHCHC) to 2-succinylbenzoate (OSB). This is o-succinylbenzoate synthase from Escherichia fergusonii (strain ATCC 35469 / DSM 13698 / CCUG 18766 / IAM 14443 / JCM 21226 / LMG 7866 / NBRC 102419 / NCTC 12128 / CDC 0568-73).